Consider the following 417-residue polypeptide: Paired box protein Pax-2 (417 aa).

The segment at residues 16–142 is a DNA-binding region (paired); the sequence is GHGGVNQLGG…SSINRIIRTK (127 aa). The interval 19-75 is PAI subdomain; sequence GVNQLGGVFVNGRPLPDVVRQRIVELAHQGVRPCDISRQLRVSHGCVSKILGRYYET. Residues 94-142 are RED subdomain; it reads KVVDKIAEYKRQNPTMFAWEIRDRLLAEGICDNDTVPSVSSINRIIRTK. Residue T226 is modified to Phosphothreonine. The tract at residues 304 to 325 is disordered; it reads KSSLSASTNPELGSNVSGTQTY. Residues 305–325 are compositionally biased toward polar residues; sequence SSLSASTNPELGSNVSGTQTY.

Interacts with ELGN3; the interaction targets PAX2 for destruction. Interacts with TLE4. Expressed in primitive cells of the kidney, ureter, eye, ear and central nervous system.

The protein localises to the nucleus. Functionally, transcription factor that may have a role in kidney cell differentiation. Has a critical role in the development of the urogenital tract, the eyes, and the CNS. The chain is Paired box protein Pax-2 (PAX2) from Homo sapiens (Human).